Consider the following 379-residue polypeptide: Protein-glutamate methylesterase/protein-glutamine glutaminase (379 aa).

The region spanning 4 to 121 (KVLVVDDSSF…AKNSDEAGSL (118 aa)) is the Response regulatory domain. A 4-aspartylphosphate modification is found at Asp-55. The region spanning 185–379 (SGKEYKLLAI…ASMVKEISRG (195 aa)) is the CheB-type methylesterase domain. Active-site residues include Ser-197, His-224, and Asp-321.

It belongs to the CheB family. Post-translationally, phosphorylated by CheA. Phosphorylation of the N-terminal regulatory domain activates the methylesterase activity.

The protein resides in the cytoplasm. It catalyses the reaction [protein]-L-glutamate 5-O-methyl ester + H2O = L-glutamyl-[protein] + methanol + H(+). It carries out the reaction L-glutaminyl-[protein] + H2O = L-glutamyl-[protein] + NH4(+). Functionally, involved in chemotaxis. Part of a chemotaxis signal transduction system that modulates chemotaxis in response to various stimuli. Catalyzes the demethylation of specific methylglutamate residues introduced into the chemoreceptors (methyl-accepting chemotaxis proteins or MCP) by CheR. Also mediates the irreversible deamidation of specific glutamine residues to glutamic acid. The protein is Protein-glutamate methylesterase/protein-glutamine glutaminase of Colwellia psychrerythraea (strain 34H / ATCC BAA-681) (Vibrio psychroerythus).